The following is a 192-amino-acid chain: Ras-like GTP-binding protein rhoA (192 aa).

12–19 (GDGACGKT) contacts GTP. Positions 34–42 (YVPTVFENY) match the Effector region motif. Residues 59–63 (DTAGQ) and 117–120 (NKRD) contribute to the GTP site. Cys189 bears the Cysteine methyl ester mark. A lipid anchor (S-geranylgeranyl cysteine) is attached at Cys189. Positions 190 to 192 (MIL) are cleaved as a propeptide — removed in mature form.

This sequence belongs to the small GTPase superfamily. Rho family. May interact with unc-89 (via DN and PH domains). Interacts with bli-3 and memo-1. As to expression, in larvae and adults, enriched at the tip of the head where the anterior sensory organ is located and in the pharyngeal nerve ring (at protein level). In embryos, enriched at the boundaries of dorsal cells undergoing intercalation, ventral enclosure and elongation.

The protein localises to the cell membrane. Its subcellular location is the cytoplasm. The protein resides in the cytoskeleton. It is found in the cell cortex. Its activity is regulated as follows. GTP hydrolysis is stimulated by unc-89. Its function is as follows. Required for ventral migration of epidermal cells during ventral enclosure in the embryo and for cell elongation. Also required for ventral migration of P cells during larval development. Involved in asymmetric spindle positioning during anaphase and establishment of cell polarity during embryo development. In adults, involved in regulation of multiple processes including locomotion, pharyngeal pumping, fecundity, ovulation, defecation and body morphology. In body wall muscles, regulates organization of myosin thick filaments downstream of unc-89. Association with the oxidase bli-3 promotes ROS production and this interaction may be modulated by memo-1, in order to control the oxidative stress response and longevity. The sequence is that of Ras-like GTP-binding protein rhoA from Caenorhabditis elegans.